A 296-amino-acid chain; its full sequence is Porphobilinogen deaminase (296 aa).

Cys235 bears the S-(dipyrrolylmethanemethyl)cysteine mark.

The protein belongs to the HMBS family. As to quaternary structure, monomer. It depends on dipyrromethane as a cofactor.

It carries out the reaction 4 porphobilinogen + H2O = hydroxymethylbilane + 4 NH4(+). It functions in the pathway porphyrin-containing compound metabolism; protoporphyrin-IX biosynthesis; coproporphyrinogen-III from 5-aminolevulinate: step 2/4. Tetrapolymerization of the monopyrrole PBG into the hydroxymethylbilane pre-uroporphyrinogen in several discrete steps. This Alkaliphilus oremlandii (strain OhILAs) (Clostridium oremlandii (strain OhILAs)) protein is Porphobilinogen deaminase.